Consider the following 408-residue polypeptide: MEPLISPQPRFRLQPIPENPSSSSSSASITIPRSISNTSFFHEISQERLLLHHQDLEQSVQDDKEDQDSDSDETNRFLSQTRPLHRSRTAPAMVIIKDLRTKPPETKKPSPVSKSIIRQAIFLLIVYLTLGVSIYSFNRDHYSGIETHPVVDALYFCIVTMCTIGYGDIAPLTPWTKIFAVVFVLFGFGFLDILLSGVVNYVLDLQESMILTGIQTRQHHQHHHHHRFSAKDYIIDFEKGRMRIRMKVCLALCVVVLCIGVGALVLHFVEELGFVDSVYLSVMSVTTVGYGDRAFKTLQGRLFAAVWLLVSTLAVARAFLYLAEARIDRRHRKAVKLALNREITVDDLLKADTYQHGFISKSEYIVLKLKEMGKITQKDIDQVVIQFEKLDPNQIGKITLPDLLGDPL.

2 disordered regions span residues 1 to 29 (MEPL…SASI) and 58 to 82 (QSVQ…SQTR). Over residues 15–29 (PIPENPSSSSSSASI) the composition is skewed to low complexity. Topologically, residues 22 to 115 (SSSSSASITI…TKKPSPVSKS (94 aa)) are stromal. The segment covering 63–72 (DKEDQDSDSD) has biased composition (acidic residues). A helical transmembrane segment spans residues 116–136 (IIRQAIFLLIVYLTLGVSIYS). An intramembrane region (pore-forming) is located at residues 152–171 (DALYFCIVTMCTIGYGDIAP). Residues 178–198 (IFAVVFVLFGFGFLDILLSGV) traverse the membrane as a helical segment. The Stromal portion of the chain corresponds to 199 to 248 (VNYVLDLQESMILTGIQTRQHHQHHHHHRFSAKDYIIDFEKGRMRIRMKV). A helical membrane pass occupies residues 249–269 (CLALCVVVLCIGVGALVLHFV). The pore-forming intramembrane region spans 276 to 295 (DSVYLSVMSVTTVGYGDRAF). A helical membrane pass occupies residues 302–322 (LFAAVWLLVSTLAVARAFLYL). The Stromal segment spans residues 323-408 (AEARIDRRHR…TLPDLLGDPL (86 aa)). 2 consecutive EF-hand domains span residues 339 to 374 (LNRE…EMGK) and 378 to 408 (KDID…GDPL). Residues Asp352, Glu363, Asp391, Asn393, Lys397, and Asp402 each contribute to the Ca(2+) site.

This sequence belongs to the two pore domain potassium channel (TC 1.A.1.7) family. As to quaternary structure, homodimer. In terms of tissue distribution, expressed in hydathodes and the vascular tissues of roots, stems, leaves and flowers.

The protein resides in the vacuole membrane. Functionally, probable voltage-independent potassium-selective tonoplast ion channel. The sequence is that of Two-pore potassium channel 5 (TPK5) from Arabidopsis thaliana (Mouse-ear cress).